The primary structure comprises 351 residues: DNA-directed RNA polymerase subunit alpha (351 aa).

The interval 1–245 (MPRRNLLKGF…EHFTVFVNFD (245 aa)) is alpha N-terminal domain (alpha-NTD). The tract at residues 261-351 (AVLELLNTKI…MRQKEEIDEA (91 aa)) is alpha C-terminal domain (alpha-CTD).

Belongs to the RNA polymerase alpha chain family. In terms of assembly, homodimer. The RNAP catalytic core consists of 2 alpha, 1 beta, 1 beta' and 1 omega subunit. When a sigma factor is associated with the core the holoenzyme is formed, which can initiate transcription.

It carries out the reaction RNA(n) + a ribonucleoside 5'-triphosphate = RNA(n+1) + diphosphate. Its function is as follows. DNA-dependent RNA polymerase catalyzes the transcription of DNA into RNA using the four ribonucleoside triphosphates as substrates. This Treponema pallidum (strain Nichols) protein is DNA-directed RNA polymerase subunit alpha.